A 65-amino-acid chain; its full sequence is UPF0370 protein Ent638_2968 (65 aa).

The chain crosses the membrane as a helical span at residues 4 to 24; it reads LSKYWWILVLVFLVGVLLNVI. Residues 39 to 65 are disordered; the sequence is KPELPPHRDFNDKWDDDDNWPKKDQKK. A compositionally biased stretch (basic and acidic residues) spans 42-65; that stretch reads LPPHRDFNDKWDDDDNWPKKDQKK.

This sequence belongs to the UPF0370 family.

The protein localises to the cell membrane. In Enterobacter sp. (strain 638), this protein is UPF0370 protein Ent638_2968.